A 215-amino-acid polypeptide reads, in one-letter code: Redox-sensing transcriptional repressor Rex (215 aa).

Residues 18 to 57 (LYYRFLKNLHASGKQRVSSAELSEAVKVDPATIRRDFSYF) constitute a DNA-binding region (H-T-H motif). An NAD(+)-binding site is contributed by 92–97 (GVGNLG).

This sequence belongs to the transcriptional regulatory Rex family. In terms of assembly, homodimer.

The protein localises to the cytoplasm. Modulates transcription in response to changes in cellular NADH/NAD(+) redox state. This is Redox-sensing transcriptional repressor Rex from Geobacillus sp. (strain WCH70).